The following is a 37-amino-acid chain: Large ribosomal subunit protein bL36 (37 aa).

It belongs to the bacterial ribosomal protein bL36 family.

In Salinispora arenicola (strain CNS-205), this protein is Large ribosomal subunit protein bL36.